Here is a 226-residue protein sequence, read N- to C-terminus: ATP synthase F(0) complex subunit a (226 aa).

6 helical membrane-spanning segments follow: residues 6–26, 68–88, 97–117, 138–158, 164–184, and 189–209; these read FASF…IILF, WSLM…LGLL, QLSM…VMGF, IPML…ALAV, ITAG…LSTI, and TLII…VALI.

This sequence belongs to the ATPase A chain family. In terms of assembly, component of the ATP synthase complex composed at least of ATP5F1A/subunit alpha, ATP5F1B/subunit beta, ATP5MC1/subunit c (homooctomer), MT-ATP6/subunit a, MT-ATP8/subunit 8, ATP5ME/subunit e, ATP5MF/subunit f, ATP5MG/subunit g, ATP5MK/subunit k, ATP5MJ/subunit j, ATP5F1C/subunit gamma, ATP5F1D/subunit delta, ATP5F1E/subunit epsilon, ATP5PF/subunit F6, ATP5PB/subunit b, ATP5PD/subunit d, ATP5PO/subunit OSCP. ATP synthase complex consists of a soluble F(1) head domain (subunits alpha(3) and beta(3)) - the catalytic core - and a membrane F(0) domain - the membrane proton channel (subunits c, a, 8, e, f, g, k and j). These two domains are linked by a central stalk (subunits gamma, delta, and epsilon) rotating inside the F1 region and a stationary peripheral stalk (subunits F6, b, d, and OSCP). Interacts with DNAJC30; interaction is direct.

It is found in the mitochondrion inner membrane. The catalysed reaction is H(+)(in) = H(+)(out). Its function is as follows. Subunit a, of the mitochondrial membrane ATP synthase complex (F(1)F(0) ATP synthase or Complex V) that produces ATP from ADP in the presence of a proton gradient across the membrane which is generated by electron transport complexes of the respiratory chain. ATP synthase complex consist of a soluble F(1) head domain - the catalytic core - and a membrane F(1) domain - the membrane proton channel. These two domains are linked by a central stalk rotating inside the F(1) region and a stationary peripheral stalk. During catalysis, ATP synthesis in the catalytic domain of F(1) is coupled via a rotary mechanism of the central stalk subunits to proton translocation. With the subunit c (ATP5MC1), forms the proton-conducting channel in the F(0) domain, that contains two crucial half-channels (inlet and outlet) that facilitate proton movement from the mitochondrial intermembrane space (IMS) into the matrix. Protons are taken up via the inlet half-channel and released through the outlet half-channel, following a Grotthuss mechanism. This chain is ATP synthase F(0) complex subunit a, found in Pan paniscus (Pygmy chimpanzee).